The primary structure comprises 188 residues: ATP synthase subunit b (188 aa).

A helical membrane pass occupies residues 5-25; that stretch reads MLLIFMMIVMIASSAMAAEAE.

Belongs to the ATPase B chain family. As to quaternary structure, F-type ATPases have 2 components, F(1) - the catalytic core - and F(0) - the membrane proton channel. F(1) has five subunits: alpha(3), beta(3), gamma(1), delta(1), epsilon(1). F(0) has three main subunits: a(1), b(2) and c(10-14). The alpha and beta chains form an alternating ring which encloses part of the gamma chain. F(1) is attached to F(0) by a central stalk formed by the gamma and epsilon chains, while a peripheral stalk is formed by the delta and b chains.

It localises to the cell inner membrane. F(1)F(0) ATP synthase produces ATP from ADP in the presence of a proton or sodium gradient. F-type ATPases consist of two structural domains, F(1) containing the extramembraneous catalytic core and F(0) containing the membrane proton channel, linked together by a central stalk and a peripheral stalk. During catalysis, ATP synthesis in the catalytic domain of F(1) is coupled via a rotary mechanism of the central stalk subunits to proton translocation. Functionally, component of the F(0) channel, it forms part of the peripheral stalk, linking F(1) to F(0). This chain is ATP synthase subunit b, found in Thermodesulfovibrio yellowstonii (strain ATCC 51303 / DSM 11347 / YP87).